The primary structure comprises 455 residues: Kynurenine 3-monooxygenase (455 aa).

The protein belongs to the aromatic-ring hydroxylase family. KMO subfamily. It depends on FAD as a cofactor.

The enzyme catalyses L-kynurenine + NADPH + O2 + H(+) = 3-hydroxy-L-kynurenine + NADP(+) + H2O. Its pathway is cofactor biosynthesis; NAD(+) biosynthesis; quinolinate from L-kynurenine: step 1/3. In terms of biological role, catalyzes the hydroxylation of L-kynurenine (L-Kyn) to form 3-hydroxy-L-kynurenine (L-3OHKyn). Required for synthesis of quinolinic acid. The chain is Kynurenine 3-monooxygenase from Xanthomonas oryzae pv. oryzae (strain PXO99A).